Here is a 109-residue protein sequence, read N- to C-terminus: Nucleoid-associated protein YbaB (109 aa).

The protein belongs to the YbaB/EbfC family. As to quaternary structure, homodimer.

Its subcellular location is the cytoplasm. The protein resides in the nucleoid. Binds to DNA and alters its conformation. May be involved in regulation of gene expression, nucleoid organization and DNA protection. The chain is Nucleoid-associated protein YbaB from Escherichia coli O127:H6 (strain E2348/69 / EPEC).